Reading from the N-terminus, the 427-residue chain is Adenylosuccinate synthetase (427 aa).

Residues 12–18 (GDEGKGK) and 40–42 (GHT) contribute to the GTP site. Asp13 (proton acceptor) is an active-site residue. 2 residues coordinate Mg(2+): Asp13 and Gly40. Residues 13–16 (DEGK), 38–41 (NAGH), Thr126, Arg140, Gln221, Thr236, and Arg299 contribute to the IMP site. His41 serves as the catalytic Proton donor. 295–301 (STTKRPR) contributes to the substrate binding site. GTP contacts are provided by residues Arg301, 327-329 (KLD), and 409-411 (SVG).

This sequence belongs to the adenylosuccinate synthetase family. Homodimer. Requires Mg(2+) as cofactor.

The protein localises to the cytoplasm. It carries out the reaction IMP + L-aspartate + GTP = N(6)-(1,2-dicarboxyethyl)-AMP + GDP + phosphate + 2 H(+). It participates in purine metabolism; AMP biosynthesis via de novo pathway; AMP from IMP: step 1/2. Plays an important role in the de novo pathway of purine nucleotide biosynthesis. Catalyzes the first committed step in the biosynthesis of AMP from IMP. The sequence is that of Adenylosuccinate synthetase from Borrelia recurrentis (strain A1).